The following is a 290-amino-acid chain: 4-diphosphocytidyl-2-C-methyl-D-erythritol kinase (290 aa).

The active site involves K11. Residue 97–107 (PVAAGIGGGSS) participates in ATP binding. D139 is an active-site residue.

It belongs to the GHMP kinase family. IspE subfamily.

The enzyme catalyses 4-CDP-2-C-methyl-D-erythritol + ATP = 4-CDP-2-C-methyl-D-erythritol 2-phosphate + ADP + H(+). It participates in isoprenoid biosynthesis; isopentenyl diphosphate biosynthesis via DXP pathway; isopentenyl diphosphate from 1-deoxy-D-xylulose 5-phosphate: step 3/6. Catalyzes the phosphorylation of the position 2 hydroxy group of 4-diphosphocytidyl-2C-methyl-D-erythritol. This chain is 4-diphosphocytidyl-2-C-methyl-D-erythritol kinase, found in Methylobacterium radiotolerans (strain ATCC 27329 / DSM 1819 / JCM 2831 / NBRC 15690 / NCIMB 10815 / 0-1).